The sequence spans 504 residues: MFNWFRRQFGKDNTAPESAPPEGAEVSPELAPEVIQAETESPSEEDSQTTELAAPPPEEPSSDTANPDDYLQWAKAAYQNIQARKAETVSPPESAAAITVEAGIEETAEEIVVAPESDQATATEADLPSPETEITTGPAWLQKSDRLEALKETAVEEATVAGTLTAESMAMDDDFMWSAKVLAAQGRSAADVSAEEIDWLRKLRQGLSKTRVNLVNQLKSIVGQGPLNEAAVEEIEAILLQADVGVEATDYIITTLQDKLREEALPPEQAIEFLKEILRSILDRPLLSLPSAEFAPEAEGLNVWLLTGVNGAGKTTTIGKLAFMAKQSGYDCVIAAADTFRAAAVEQVKVWGERSGVPVIANPGQNTDPAAVVYDGISAAQSRNVNLLLVDTAGRLQNKKNLMDELAKIRRIIDKKAPNATVESLLVLDATLGQNGLRQAEVFAEAAKLSGVVLTKLDGSAKGGVALAVAQQLNLPIRFIGAGEGIEDLRPFSSYEFVEALLNG.

Disordered regions lie at residues 1–71 (MFNW…DDYL) and 116–135 (ESDQ…TEIT). Residues 308–315 (GVNGAGKT), 391–395 (DTAGR), and 455–458 (TKLD) contribute to the GTP site.

The protein belongs to the GTP-binding SRP family. FtsY subfamily. Part of the signal recognition particle protein translocation system, which is composed of SRP and FtsY.

Its subcellular location is the cell inner membrane. It is found in the cytoplasm. It catalyses the reaction GTP + H2O = GDP + phosphate + H(+). In terms of biological role, involved in targeting and insertion of nascent membrane proteins into the cytoplasmic membrane. Acts as a receptor for the complex formed by the signal recognition particle (SRP) and the ribosome-nascent chain (RNC). This Synechocystis sp. (strain ATCC 27184 / PCC 6803 / Kazusa) protein is Signal recognition particle receptor FtsY.